The sequence spans 271 residues: MASHDKRDYQAELTDAALAADLATAAGELLLEIREEIGFDQPRALGDAGDRLANSLLLSRLRAERPGDAVLSEEAHDDRVRLQAGRVWIIDPLDGTREFSTAGRTDWAVHIALWQRTTGGVADGRREITDAAVALPARGNRVYRSDTVTAGAVTGGVPNILRIAVSATRPPTILHRIRQKLAIEPVAIGSAGAKAMAVVDGDVDAYLHVGGQWEWDSAAPAGVVLAAGMHASRLDGSPLRYNQLDPYLPDFVMCRADIAPILLGVIREVWQ.

Residues E73, D91, L93, D94, and D216 each coordinate Mg(2+). A substrate-binding site is contributed by E73. Residues 93 to 96 (LDGT) and D216 each bind substrate.

Belongs to the inositol monophosphatase superfamily. As to quaternary structure, homodimer. Mg(2+) is required as a cofactor.

It carries out the reaction adenosine 3',5'-bisphosphate + H2O = AMP + phosphate. The enzyme catalyses beta-D-fructose 1,6-bisphosphate + H2O = beta-D-fructose 6-phosphate + phosphate. The catalysed reaction is a myo-inositol phosphate + H2O = myo-inositol + phosphate. It participates in sulfur metabolism; sulfate assimilation. Functionally, phosphatase with a broad specificity. Its primary physiological function is to dephosphorylate 3'-phosphoadenosine 5'-phosphate (PAP) and 3'-phosphoadenosine 5'-phosphosulfate (PAPS). Thus, plays a role in mycobacterial sulfur metabolism, since it can serve as a key regulator of the sulfate assimilation pathway by controlling the pools of PAP and PAPS in the cell. To a lesser extent, is also able to hydrolyze inositol 1-phosphate (I-1-P), fructose 1,6-bisphosphate (FBP) (to fructose 6-phosphate (F-6-P)) and AMP in vitro, but this might not be significant in vivo. This Mycobacterium leprae (strain TN) protein is 3'-phosphoadenosine 5'-phosphate phosphatase (cysQ).